A 411-amino-acid polypeptide reads, in one-letter code: Eukaryotic initiation factor 4A-III (411 aa).

Position 1 is an N-acetylmethionine (Met-1). Residue Ala-2 is modified to N-acetylalanine; in Eukaryotic initiation factor 4A-III, N-terminally processed. Phosphoserine is present on residues Ser-10 and Ser-12. A Glycyl lysine isopeptide (Lys-Gly) (interchain with G-Cter in SUMO2) cross-link involves residue Lys-19. Residues 38 to 66 (PTFDTMGLREDLLRGIYAYGFEKPSAIQQ) carry the Q motif motif. ATP contacts are provided by residues Lys-60, Gln-65, and 85 to 90 (GTGKTA). Residues 69-239 (IKQIIKGRDV…NKFMTDPIRI (171 aa)) enclose the Helicase ATP-binding domain. An N6-acetyllysine modification is found at Lys-124. Residue Lys-152 forms a Glycyl lysine isopeptide (Lys-Gly) (interchain with G-Cter in SUMO2) linkage. Position 163 is a phosphothreonine (Thr-163). A DEAD box motif is present at residues 187-190 (DEAD). An N6-acetyllysine mark is found at Lys-198 and Lys-296. The 162-residue stretch at 250-411 (GIKQFFVAVE…EMPMNVADLI (162 aa)) folds into the Helicase C-terminal domain. Residue Lys-314 forms a Glycyl lysine isopeptide (Lys-Gly) (interchain with G-Cter in SUMO2) linkage. N6-acetyllysine is present on Lys-321. Residues Asp-342 and 367 to 371 (RSGRY) each bind ATP. Glycyl lysine isopeptide (Lys-Gly) (interchain with G-Cter in SUMO2) cross-links involve residues Lys-374 and Lys-382.

Belongs to the DEAD box helicase family. eIF4A subfamily. In terms of assembly, identified in the spliceosome C complex. Core component of the mRNA splicing-dependent exon junction complex (EJC); the core complex contains CASC3, EIF4A3, MAGOH or MAGOHB, and RBM8A. Interacts with CASC3, MAGOH, NXF1, RBM8A and ALYREF/THOC4. Component of the ALYREF/THOC4-EJC-RNA complex; in the complex interacts with MAGOH, RBM8A and THOC4 (via the WXHD motif); these interactions are likely specific to RNA-bound EJC. May interact with NOM1. Interacts with POLDIP3. Interacts with CWC22 and PRPF19 in an RNA-independent manner. Direct interaction with CWC22 is mediated by the helicase C-terminal domain. Full interaction with CWC22 occurs only when EIF4A3 is not part of the EJC and prevents EIF4A3 binding to RNA. Identified in a complex composed of the EJC core, UPF3B and UPF2. The EJC core can also interact with UPF3A (in vitro). Interacts with NCBP3. Interacts with NRDE2. Interacts with DHX34; the interaction is RNA-independent. Ubiquitously expressed.

The protein localises to the nucleus. It is found in the nucleus speckle. The protein resides in the cytoplasm. The catalysed reaction is ATP + H2O = ADP + phosphate + H(+). With respect to regulation, the ATPase activity is increased some 4-fold in the presence of RNA. ATP-dependent RNA helicase. Involved in pre-mRNA splicing as component of the spliceosome. Core component of the splicing-dependent multiprotein exon junction complex (EJC) deposited at splice junctions on mRNAs. The EJC is a dynamic structure consisting of core proteins and several peripheral nuclear and cytoplasmic associated factors that join the complex only transiently either during EJC assembly or during subsequent mRNA metabolism. The EJC marks the position of the exon-exon junction in the mature mRNA for the gene expression machinery and the core components remain bound to spliced mRNAs throughout all stages of mRNA metabolism thereby influencing downstream processes including nuclear mRNA export, subcellular mRNA localization, translation efficiency and nonsense-mediated mRNA decay (NMD). Its RNA-dependent ATPase and RNA-helicase activities are induced by CASC3, but abolished in presence of the MAGOH-RBM8A heterodimer, thereby trapping the ATP-bound EJC core onto spliced mRNA in a stable conformation. The inhibition of ATPase activity by the MAGOH-RBM8A heterodimer increases the RNA-binding affinity of the EJC. Involved in translational enhancement of spliced mRNAs after formation of the 80S ribosome complex. Binds spliced mRNA in sequence-independent manner, 20-24 nucleotides upstream of mRNA exon-exon junctions. Shows higher affinity for single-stranded RNA in an ATP-bound core EJC complex than after the ATP is hydrolyzed. Involved in the splicing modulation of BCL2L1/Bcl-X (and probably other apoptotic genes); specifically inhibits formation of proapoptotic isoforms such as Bcl-X(S); the function is different from the established EJC assembly. Involved in craniofacial development. The sequence is that of Eukaryotic initiation factor 4A-III (EIF4A3) from Homo sapiens (Human).